Reading from the N-terminus, the 327-residue chain is Nocardicin C-9' epimerase (327 aa).

Lys43 is modified (N6-(pyridoxal phosphate)lysine).

The protein belongs to the ACC deaminase/D-cysteine desulfhydrase family. Pyridoxal 5'-phosphate is required as a cofactor.

It catalyses the reaction isonocardicin C = nocardicin C. The enzyme catalyses isonocardicin A = nocardicin A. It functions in the pathway antibiotic biosynthesis. In terms of biological role, involved in the biosynthesis of the beta-lactam antibiotic nocardicin A. Catalyzes the interconversion of the nocardicin homoseryl side chain in both nocardicin A with isonocardicin A, and nocardicin C with isonocardicin C. The chain is Nocardicin C-9' epimerase from Nocardia uniformis subsp. tsuyamanensis.